The chain runs to 586 residues: Monoterpene synthase TPS4, chloroplastic (586 aa).

The N-terminal 47 residues, 1–47 (MAATRNLSLLAQSSQPWAGIYGSHGSPRPISSWLRRQSIAKTSYICM), are a transit peptide targeting the chloroplast. 5 residues coordinate Mg(2+): aspartate 340, aspartate 344, aspartate 485, threonine 489, and glutamate 493. Residues 340–344 (DDIFD) carry the DDXXD motif motif.

It belongs to the terpene synthase family. Tpsg subfamily. As to quaternary structure, monomer. Mg(2+) is required as a cofactor.

It localises to the plastid. The protein localises to the chloroplast. The catalysed reaction is (2E)-geranyl diphosphate + H2O = (2E)-geraniol + diphosphate. It participates in secondary metabolite biosynthesis; terpenoid biosynthesis. Its function is as follows. Monoterpene synthase involved in the biosynthesis of volatile organic compounds. Mediates the conversion of (2E)-geranyl diphosphate (GPP) into the acyclic monoterpene, geraniol. Does not use (2E,6E)-farnesyl diphosphate (FPP) as substrate. This Cananga odorata (Ylang-ylang tree) protein is Monoterpene synthase TPS4, chloroplastic.